Reading from the N-terminus, the 370-residue chain is Holliday junction branch migration complex subunit RuvB (370 aa).

The interval 1-182 (MDERMMTSAK…FGVIHRLEYY (182 aa)) is large ATPase domain (RuvB-L). ATP is bound by residues Leu-21, Arg-22, Gly-63, Lys-66, Thr-67, Thr-68, 129 to 131 (EDF), Arg-172, Tyr-182, and Arg-219. Thr-67 contributes to the Mg(2+) binding site. Positions 183–253 (RPDELEFIIL…VAREALRRLE (71 aa)) are small ATPAse domain (RuvB-S). Residues 256 to 370 (PRGLDTTDQR…AEQAALSFDE (115 aa)) form a head domain (RuvB-H) region. Residues Arg-311 and Arg-316 each contribute to the DNA site.

Belongs to the RuvB family. In terms of assembly, homohexamer. Forms an RuvA(8)-RuvB(12)-Holliday junction (HJ) complex. HJ DNA is sandwiched between 2 RuvA tetramers; dsDNA enters through RuvA and exits via RuvB. An RuvB hexamer assembles on each DNA strand where it exits the tetramer. Each RuvB hexamer is contacted by two RuvA subunits (via domain III) on 2 adjacent RuvB subunits; this complex drives branch migration. In the full resolvosome a probable DNA-RuvA(4)-RuvB(12)-RuvC(2) complex forms which resolves the HJ.

It is found in the cytoplasm. It carries out the reaction ATP + H2O = ADP + phosphate + H(+). Its function is as follows. The RuvA-RuvB-RuvC complex processes Holliday junction (HJ) DNA during genetic recombination and DNA repair, while the RuvA-RuvB complex plays an important role in the rescue of blocked DNA replication forks via replication fork reversal (RFR). RuvA specifically binds to HJ cruciform DNA, conferring on it an open structure. The RuvB hexamer acts as an ATP-dependent pump, pulling dsDNA into and through the RuvAB complex. RuvB forms 2 homohexamers on either side of HJ DNA bound by 1 or 2 RuvA tetramers; 4 subunits per hexamer contact DNA at a time. Coordinated motions by a converter formed by DNA-disengaged RuvB subunits stimulates ATP hydrolysis and nucleotide exchange. Immobilization of the converter enables RuvB to convert the ATP-contained energy into a lever motion, pulling 2 nucleotides of DNA out of the RuvA tetramer per ATP hydrolyzed, thus driving DNA branch migration. The RuvB motors rotate together with the DNA substrate, which together with the progressing nucleotide cycle form the mechanistic basis for DNA recombination by continuous HJ branch migration. Branch migration allows RuvC to scan DNA until it finds its consensus sequence, where it cleaves and resolves cruciform DNA. The chain is Holliday junction branch migration complex subunit RuvB from Heliobacterium modesticaldum (strain ATCC 51547 / Ice1).